Here is an 89-residue protein sequence, read N- to C-terminus: Large ribosomal subunit protein bL27 (89 aa).

It belongs to the bacterial ribosomal protein bL27 family.

This chain is Large ribosomal subunit protein bL27, found in Cereibacter sphaeroides (strain ATCC 17029 / ATH 2.4.9) (Rhodobacter sphaeroides).